A 189-amino-acid chain; its full sequence is CDP-archaeol synthase (189 aa).

The next 5 membrane-spanning stretches (helical) occupy residues valine 6–alanine 26, glycine 71–valine 91, isoleucine 96–leucine 116, glycine 125–alanine 145, and valine 162–leucine 184.

This sequence belongs to the CDP-archaeol synthase family. The cofactor is Mg(2+).

Its subcellular location is the cell membrane. It carries out the reaction 2,3-bis-O-(geranylgeranyl)-sn-glycerol 1-phosphate + CTP + H(+) = CDP-2,3-bis-O-(geranylgeranyl)-sn-glycerol + diphosphate. It participates in membrane lipid metabolism; glycerophospholipid metabolism. Its function is as follows. Catalyzes the formation of CDP-2,3-bis-(O-geranylgeranyl)-sn-glycerol (CDP-archaeol) from 2,3-bis-(O-geranylgeranyl)-sn-glycerol 1-phosphate (DGGGP) and CTP. This reaction is the third ether-bond-formation step in the biosynthesis of archaeal membrane lipids. The chain is CDP-archaeol synthase from Natronomonas pharaonis (strain ATCC 35678 / DSM 2160 / CIP 103997 / JCM 8858 / NBRC 14720 / NCIMB 2260 / Gabara) (Halobacterium pharaonis).